Consider the following 370-residue polypeptide: Protein-glutamate methylesterase/protein-glutamine glutaminase 3 (370 aa).

A Response regulatory domain is found at lysine 3–glutamate 119. Aspartate 53 bears the 4-aspartylphosphate mark. Positions serine 166–threonine 360 constitute a CheB-type methylesterase domain. Catalysis depends on residues serine 178, histidine 205, and aspartate 302.

It belongs to the CheB family. Phosphorylated by CheA. Phosphorylation of the N-terminal regulatory domain activates the methylesterase activity.

It is found in the cytoplasm. The enzyme catalyses [protein]-L-glutamate 5-O-methyl ester + H2O = L-glutamyl-[protein] + methanol + H(+). It catalyses the reaction L-glutaminyl-[protein] + H2O = L-glutamyl-[protein] + NH4(+). In terms of biological role, involved in chemotaxis. Part of a chemotaxis signal transduction system that modulates chemotaxis in response to various stimuli. Catalyzes the demethylation of specific methylglutamate residues introduced into the chemoreceptors (methyl-accepting chemotaxis proteins or MCP) by CheR. Also mediates the irreversible deamidation of specific glutamine residues to glutamic acid. This is Protein-glutamate methylesterase/protein-glutamine glutaminase 3 from Rhodospirillum rubrum (strain ATCC 11170 / ATH 1.1.1 / DSM 467 / LMG 4362 / NCIMB 8255 / S1).